The sequence spans 451 residues: Homeobox protein meis3-B (451 aa).

Residues 33 to 64 are disordered; sequence HHSLSQSTPYGSTGAAHRVPMPPGMGSNDGLK. Polar residues predominate over residues 34 to 43; it reads HSLSQSTPYG. In terms of domain architecture, MEIS N-terminal spans 102–185; it reads GGDVCSSDSF…PIDLVIDDRD (84 aa). The segment at 206–272 is disordered; the sequence is NNTWIRDHDE…RDKKRNKKRG (67 aa). Positions 218–230 are enriched in low complexity; it reads STHSGTPGPSSGG. Over residues 231 to 242 the composition is skewed to polar residues; sequence LASQSGDNSSEQ. A DNA-binding region (homeobox) is located at residues 267 to 329; that stretch reads RNKKRGIFPK…NARRRIVQPM (63 aa).

It belongs to the TALE/MEIS homeobox family.

Its subcellular location is the nucleus. In terms of biological role, a caudalizing protein which is required to pattern the anterior/posterior (A/P) axis during central nervous system (CNS) formation. Inhibits anterior neural expression and acts as a transcriptional activator to induce posterior neural gene expression. Maintains a proper A/P balance required for hindbrain formation by activating the FGF/MAPK pathway, which modulates the planar cell polarity (PCP) pathway. Interacts with retinoid signaling during hindbrain patterning. In Xenopus laevis (African clawed frog), this protein is Homeobox protein meis3-B (meis3-b).